The following is a 206-amino-acid chain: Small ribosomal subunit protein uS4 (206 aa).

The 61-residue stretch at threonine 96–lysine 156 folds into the S4 RNA-binding domain.

It belongs to the universal ribosomal protein uS4 family. In terms of assembly, part of the 30S ribosomal subunit. Contacts protein S5. The interaction surface between S4 and S5 is involved in control of translational fidelity.

One of the primary rRNA binding proteins, it binds directly to 16S rRNA where it nucleates assembly of the body of the 30S subunit. Functionally, with S5 and S12 plays an important role in translational accuracy. In Shewanella sp. (strain MR-4), this protein is Small ribosomal subunit protein uS4.